The primary structure comprises 339 residues: Lipopolysaccharide 1,2-glucosyltransferase (339 aa).

UDP contacts are provided by residues G35–Y40 and D132–A133. Positions 132 and 134 each coordinate Mg(2+). Short sequence motifs (DXD) lie at residues D132–D134 and D219–D221. H268 contributes to the Mg(2+) binding site. H268 to K274 is a UDP binding site.

The protein belongs to the glycosyltransferase 8 family. Mg(2+) serves as cofactor.

It localises to the cell inner membrane. The enzyme catalyses UDP-glucose + [lipopolysaccharide] = UDP + D-glucosyl-[lipopolysaccharide].. It participates in bacterial outer membrane biogenesis; LPS core biosynthesis. In terms of biological role, glucosyltransferase involved in the biosynthesis of the core oligosaccharide region of lipopolysaccharide (LPS). Catalyzes the addition of a glucose (glucose II) to the outer-core galactose I. Has a marked preference for its specific donor substrate, but it appears to have a relaxed specificity for alternate LPS acceptor residues, providing the overall size of the acceptor is conserved. In Escherichia coli, this protein is Lipopolysaccharide 1,2-glucosyltransferase.